The following is a 506-amino-acid chain: BTB/POZ domain-containing protein At3g22104 (506 aa).

The BTB domain maps to 6-76 (SDLEVDINGE…CYNDGRVAVM (71 aa)). Residues 187–435 (TWWFDEVLVL…LDEQQQQQQQ (249 aa)) form the NPH3 domain. A coiled-coil region spans residues 421 to 492 (QAIETLDEQQ…MEVIKKRSKS (72 aa)). A disordered region spans residues 485–506 (VIKKRSKSSSKGSNRSLPKLCS).

It belongs to the NPH3 family.

It participates in protein modification; protein ubiquitination. Functionally, may act as a substrate-specific adapter of an E3 ubiquitin-protein ligase complex (CUL3-RBX1-BTB) which mediates the ubiquitination and subsequent proteasomal degradation of target proteins. The polypeptide is BTB/POZ domain-containing protein At3g22104 (Arabidopsis thaliana (Mouse-ear cress)).